Reading from the N-terminus, the 295-residue chain is Ribosomal RNA small subunit methyltransferase A (295 aa).

Residues asparagine 25, leucine 27, glycine 52, glutamate 73, aspartate 98, and asparagine 120 each coordinate S-adenosyl-L-methionine.

It belongs to the class I-like SAM-binding methyltransferase superfamily. rRNA adenine N(6)-methyltransferase family. RsmA subfamily.

Its subcellular location is the cytoplasm. It carries out the reaction adenosine(1518)/adenosine(1519) in 16S rRNA + 4 S-adenosyl-L-methionine = N(6)-dimethyladenosine(1518)/N(6)-dimethyladenosine(1519) in 16S rRNA + 4 S-adenosyl-L-homocysteine + 4 H(+). Its function is as follows. Specifically dimethylates two adjacent adenosines (A1518 and A1519) in the loop of a conserved hairpin near the 3'-end of 16S rRNA in the 30S particle. May play a critical role in biogenesis of 30S subunits. The protein is Ribosomal RNA small subunit methyltransferase A of Desulfotalea psychrophila (strain LSv54 / DSM 12343).